A 316-amino-acid chain; its full sequence is Phosphate acyltransferase (316 aa).

This sequence belongs to the PlsX family. As to quaternary structure, homodimer. Probably interacts with PlsY.

Its subcellular location is the cytoplasm. It catalyses the reaction a fatty acyl-[ACP] + phosphate = an acyl phosphate + holo-[ACP]. It participates in lipid metabolism; phospholipid metabolism. Its function is as follows. Catalyzes the reversible formation of acyl-phosphate (acyl-PO(4)) from acyl-[acyl-carrier-protein] (acyl-ACP). This enzyme utilizes acyl-ACP as fatty acyl donor, but not acyl-CoA. The sequence is that of Phosphate acyltransferase from Chlamydia caviae (strain ATCC VR-813 / DSM 19441 / 03DC25 / GPIC) (Chlamydophila caviae).